The primary structure comprises 511 residues: NAD(P)H-quinone oxidoreductase subunit 2, chloroplastic (511 aa).

A run of 14 helical transmembrane segments spans residues 15-35, 39-59, 78-98, 108-128, 132-152, 167-187, 210-230, 244-264, 278-298, 306-326, 334-354, 377-397, 410-430, and 466-486; these read LLPE…DLTF, VLSW…VVLL, SLSI…ILLS, ALTE…LLSG, LIMI…LTGY, LLIG…LYGL, FASW…VAAA, PTPV…ALAT, WHLL…LIAI, MLGY…IAGN, LVYM…IILF, VFCF…AGFF, GFYI…YYYL, and LGIG…NPII.

It belongs to the complex I subunit 2 family. In terms of assembly, NDH is composed of at least 16 different subunits, 5 of which are encoded in the nucleus.

The protein resides in the plastid. It is found in the chloroplast thylakoid membrane. The catalysed reaction is a plastoquinone + NADH + (n+1) H(+)(in) = a plastoquinol + NAD(+) + n H(+)(out). The enzyme catalyses a plastoquinone + NADPH + (n+1) H(+)(in) = a plastoquinol + NADP(+) + n H(+)(out). Functionally, NDH shuttles electrons from NAD(P)H:plastoquinone, via FMN and iron-sulfur (Fe-S) centers, to quinones in the photosynthetic chain and possibly in a chloroplast respiratory chain. The immediate electron acceptor for the enzyme in this species is believed to be plastoquinone. Couples the redox reaction to proton translocation, and thus conserves the redox energy in a proton gradient. The chain is NAD(P)H-quinone oxidoreductase subunit 2, chloroplastic from Chlorokybus atmophyticus (Soil alga).